The primary structure comprises 398 residues: Chalcone synthase (398 aa).

Residue cysteine 167 is part of the active site.

It belongs to the thiolase-like superfamily. Chalcone/stilbene synthases family.

It carries out the reaction (E)-4-coumaroyl-CoA + 3 malonyl-CoA + 3 H(+) = 2',4,4',6'-tetrahydroxychalcone + 3 CO2 + 4 CoA. Its pathway is secondary metabolite biosynthesis; flavonoid biosynthesis. In terms of biological role, the primary product of this enzyme is 4,2',4',6'-tetrahydroxychalcone (also termed naringenin-chalcone or chalcone) which can under specific conditions spontaneously isomerize into naringenin. This Callistephus chinensis (China aster) protein is Chalcone synthase (CHS).